Here is a 301-residue protein sequence, read N- to C-terminus: Thiosulfate sulfurtransferase (301 aa).

Rhodanese domains lie at 31 to 138 and 171 to 289; these read GSPG…DTSY and QSGG…MPIE. Residue cysteine 248 is the Cysteine persulfide intermediate of the active site. Arginine 253 contacts substrate.

It carries out the reaction thiosulfate + hydrogen cyanide = thiocyanate + sulfite + 2 H(+). This is Thiosulfate sulfurtransferase (thtR) from Corynebacterium glutamicum (strain ATCC 13032 / DSM 20300 / JCM 1318 / BCRC 11384 / CCUG 27702 / LMG 3730 / NBRC 12168 / NCIMB 10025 / NRRL B-2784 / 534).